A 379-amino-acid polypeptide reads, in one-letter code: Chaperone protein DnaJ (379 aa).

In terms of domain architecture, J spans 4-69; it reads DLYETLGVKK…QKRAAYDRYG (66 aa). The CR-type zinc finger occupies 137–215; the sequence is GKTAQIRVPT…CHGQGRVTEE (79 aa). Cysteine 150, cysteine 153, cysteine 167, cysteine 170, cysteine 189, cysteine 192, cysteine 203, and cysteine 206 together coordinate Zn(2+). CXXCXGXG motif repeat units follow at residues 150–157, 167–174, 189–196, and 203–210; these read CDVCTGSG, CATCQGSG, CPTCGGRG, and CTKCHGQG.

The protein belongs to the DnaJ family. Homodimer. It depends on Zn(2+) as a cofactor.

It is found in the cytoplasm. Functionally, participates actively in the response to hyperosmotic and heat shock by preventing the aggregation of stress-denatured proteins and by disaggregating proteins, also in an autonomous, DnaK-independent fashion. Unfolded proteins bind initially to DnaJ; upon interaction with the DnaJ-bound protein, DnaK hydrolyzes its bound ATP, resulting in the formation of a stable complex. GrpE releases ADP from DnaK; ATP binding to DnaK triggers the release of the substrate protein, thus completing the reaction cycle. Several rounds of ATP-dependent interactions between DnaJ, DnaK and GrpE are required for fully efficient folding. Also involved, together with DnaK and GrpE, in the DNA replication of plasmids through activation of initiation proteins. This Sinorhizobium fredii (strain NBRC 101917 / NGR234) protein is Chaperone protein DnaJ.